The sequence spans 21 residues: VTVYDAEGTKVQLDGSIRLVM.

Disulfide bond interactions within and between MOMP molecules and other components form high molecular-weight oligomers.

It localises to the cell outer membrane. Functionally, structural rigidity of the outer membrane of elementary bodies and porin forming, permitting diffusion of solutes through the intracellular reticulate body membrane. The sequence is that of Major outer membrane protein from Actinobacillus equuli.